A 341-amino-acid polypeptide reads, in one-letter code: Methionine import ATP-binding protein MetN (341 aa).

An ABC transporter domain is found at 2-241 (IELNQVVKRY…PQHEVTRRFV (240 aa)). Position 38–45 (38–45 (GFSGAGKS)) interacts with ATP.

This sequence belongs to the ABC transporter superfamily. Methionine importer (TC 3.A.1.24) family. As to quaternary structure, the complex is composed of two ATP-binding proteins (MetN), two transmembrane proteins (MetI) and a solute-binding protein (MetQ).

It localises to the cell membrane. It catalyses the reaction L-methionine(out) + ATP + H2O = L-methionine(in) + ADP + phosphate + H(+). The enzyme catalyses D-methionine(out) + ATP + H2O = D-methionine(in) + ADP + phosphate + H(+). In terms of biological role, part of the ABC transporter complex MetNIQ involved in methionine import. Responsible for energy coupling to the transport system. This chain is Methionine import ATP-binding protein MetN, found in Staphylococcus haemolyticus (strain JCSC1435).